The primary structure comprises 211 residues: External core antigen (211 aa).

Positions M1–A19 are cleaved as a signal peptide. Residues G25–L27 form an HBEAG region. The interval N165–C211 is disordered. Positions V178–S204 are enriched in basic residues. Residues P183–P189 form a 1; half-length repeat. Residues P183–Q205 are 3 X 8 AA repeats of S-P-R-R-R-R-S-Q. Positions P183 to C211 are excised as a propeptide. 2 tandem repeats follow at residues S190–Q197 and S198–Q205.

The protein belongs to the orthohepadnavirus precore antigen family. In terms of assembly, homodimerizes. Phosphorylated. Post-translationally, cleaved by host furin.

It localises to the secreted. The protein localises to the host nucleus. Its function is as follows. May regulate immune response to the intracellular capsid in acting as a T-cell tolerogen, by having an immunoregulatory effect which prevents destruction of infected cells by cytotoxic T-cells. This immune regulation may predispose to chronicity during perinatal infections and prevent severe liver injury during adult infections. The polypeptide is External core antigen (Woolly monkey hepatitis B virus (isolate Louisville) (WMHBV)).